We begin with the raw amino-acid sequence, 297 residues long: N-acetylneuraminate lyase (297 aa).

Aceneuramate contacts are provided by Ser-47 and Thr-48. The Proton donor role is filled by Tyr-137. The active-site Schiff-base intermediate with substrate is Lys-165. Positions 167, 189, 191, 192, and 208 each coordinate aceneuramate.

Belongs to the DapA family. NanA subfamily. In terms of assembly, homotetramer.

The protein resides in the cytoplasm. It carries out the reaction aceneuramate = aldehydo-N-acetyl-D-mannosamine + pyruvate. Its pathway is amino-sugar metabolism; N-acetylneuraminate degradation; D-fructose 6-phosphate from N-acetylneuraminate: step 1/5. Its function is as follows. Catalyzes the reversible aldol cleavage of N-acetylneuraminic acid (sialic acid; Neu5Ac) to form pyruvate and N-acetylmannosamine (ManNAc) via a Schiff base intermediate. The protein is N-acetylneuraminate lyase of Salmonella choleraesuis (strain SC-B67).